The primary structure comprises 165 residues: Protein SprT (165 aa).

A SprT-like domain is found at 20–163 (EKLAQANLKL…RCVHCGEQLV (144 aa)). His-78 is a Zn(2+) binding site. Glu-79 is an active-site residue. His-82 serves as a coordination point for Zn(2+).

It belongs to the SprT family. The cofactor is Zn(2+).

The protein localises to the cytoplasm. The chain is Protein SprT from Shigella sonnei (strain Ss046).